The sequence spans 163 residues: Adenosine 5'-monophosphoramidase HINT2 (163 aa).

The N-terminal 17 residues, 1 to 17, are a transit peptide targeting the mitochondrion; sequence MAAAVVLAAGLRAARRA. In terms of domain architecture, HIT spans 55 to 163; it reads IFSRILDKSL…GGRQLQWPPG (109 aa). S63 and D80 together coordinate AMP. N6-acetyllysine is present on K119. N136 contacts AMP. K139 carries the post-translational modification N6-acetyllysine. AMP-binding positions include 142 to 145 and 149 to 151; these read AQSV and HIH. Positions 147 to 151 match the Histidine triad motif motif; that stretch reads HLHIH. The active-site Tele-AMP-histidine intermediate is H149.

This sequence belongs to the HINT family. In terms of tissue distribution, high expression in liver and pancreas. Expression is significantly down-regulated in hepatocellular carcinoma (HCC) patients.

It is found in the mitochondrion. It catalyses the reaction adenosine 5'-phosphoramidate + H2O = AMP + NH4(+). Functionally, exhibits adenosine 5'-monophosphoramidase activity, hydrolyzing purine nucleotide phosphoramidates with a single phosphate group such as adenosine 5'monophosphoramidate (AMP-NH2) to yield AMP and NH2. Hydrolyzes adenosine 5'-O-p-nitrophenylphosphoramidate (AMP-pNA). Hydrolyzes fluorogenic purine nucleoside tryptamine phosphoramidates in vitro. May be involved in steroid biosynthesis. May play a role in apoptosis. The sequence is that of Adenosine 5'-monophosphoramidase HINT2 from Homo sapiens (Human).